The primary structure comprises 269 residues: Peptide deformylase 1B, chloroplastic (269 aa).

The N-terminal 51 residues, 1–51 (MAARLHLRLGPRLRGFASSFAPLLAAHPRALPLSRMGSVAPLAAARARRGF), are a transit peptide targeting the chloroplast. Residues cysteine 168 and histidine 210 each coordinate Fe cation. Residue glutamate 211 is part of the active site. Histidine 214 is a binding site for Fe cation.

The protein belongs to the polypeptide deformylase family. As to quaternary structure, homodimer. It depends on Fe(2+) as a cofactor. Mainly expressed in mature leaves and sheaths.

It is found in the plastid. It localises to the chloroplast stroma. The protein localises to the mitochondrion. The enzyme catalyses N-terminal N-formyl-L-methionyl-[peptide] + H2O = N-terminal L-methionyl-[peptide] + formate. Inhibited by actinonin. In terms of biological role, removes the formyl group from the N-terminal Met of newly synthesized proteins. This chain is Peptide deformylase 1B, chloroplastic (PDF1B), found in Oryza sativa subsp. japonica (Rice).